Consider the following 187-residue polypeptide: Large ribosomal subunit protein uL22 (187 aa).

The disordered stretch occupies residues 155 to 187; that stretch reads DAVSRAAPTDDAPAKKKLSKKKLARQKEKMMRE. Over residues 169–178 the composition is skewed to basic residues; the sequence is KKKLSKKKLA.

This sequence belongs to the universal ribosomal protein uL22 family.

The chain is Large ribosomal subunit protein uL22 (RpL17) from Lonomia obliqua (Moth).